A 228-amino-acid polypeptide reads, in one-letter code: Cytidylate kinase (228 aa).

Gly-10–Thr-18 contacts ATP.

This sequence belongs to the cytidylate kinase family. Type 1 subfamily.

It is found in the cytoplasm. It carries out the reaction CMP + ATP = CDP + ADP. The catalysed reaction is dCMP + ATP = dCDP + ADP. This Acinetobacter baumannii (strain SDF) protein is Cytidylate kinase.